Here is a 200-residue protein sequence, read N- to C-terminus: Glutathione S-transferase 1-1 (200 aa).

Residues 1–73 (GSSPCRSVIM…YLVEKYGKTD (73 aa)) enclose the GST N-terminal domain. Glutathione contacts are provided by residues Ser-2, 43–45 (HTI), and 57–59 (ESR). The GST C-terminal domain occupies 79 to 200 (CPKKRAVINQ…AGCLEFKKFF (122 aa)).

It belongs to the GST superfamily. Theta family. In terms of assembly, homodimer.

It carries out the reaction RX + glutathione = an S-substituted glutathione + a halide anion + H(+). The enzyme catalyses 1,1,1-trichloro-2,2-bis(4-chlorophenyl)ethane = 1,1-dichloro-2,2-bis(4-chlorophenyl)ethylene + chloride + H(+). Conjugation of reduced glutathione to a wide number of exogenous and endogenous hydrophobic electrophiles. Has DDT dehydrochlorinase activity. In Drosophila mauritiana (Fruit fly), this protein is Glutathione S-transferase 1-1 (GstD1).